The primary structure comprises 1048 residues: MNQNEHPFAFPETKLPLTSNQNWQLSTQRQRTEKKSITNFTYQEFDYENISRDTLERCLTTIIKHHPIFGAKLSDDFYLHFPSKTHIETFAVNDLSNALKQDIDKQLADTRSAVTKSRSQAIISIMFSILPKNIIRLHVRFNSVVVDNPSVTLFFEQLTQLLSGSPLSFLNQEQTISAYNHKVNNELLSVDLESARWNEYILTLPSSANLPTICEPEKLDETDITRRCITLSQRKWQQLVTVSKKHNVTPEITLASIFSTVLSLWGNQKYLMMRFDITKINDYTGIIGQFTEPLLVGMSGFEQSFLSLVKNNQKKFEEAYHYDVKVPVFQCVNKLSNISDSHRYPANITFSSELLNTNHSKKAVWGCRQSANTWLSLHAVIEQEQLVLQWDSQDAIFPKDMIKDMLHSYTDLLDLLSQKDVNWAQPLPTLLPKHQESIRNKINQQGDLELTKELLHQRFFKNVESTPNALAIIHGQESLDYITLASYAKSCAGALTEAGVKSGDRVAVTMNKGIGQIVAVLGILYAGAIYVPVSLDQPQERRESIYQGAGINVILINESDSKNSPSNDLFFFLDWQTAIKSEPMRSPQDVAPSQPAYIIYTSGSTGTPKGVVISHQGALNTCIAINRRYQIGKNDRVLALSALHFDLSVYDIFGLLSAGGTIVLVSELERRDPIAWCQAIEEHNVTMWNSVPALFDMLLTYATCFNSIAPSKLRLTMLSGDWIGLDLPQRYRNYRVDGQFIAMGGATEASIWSNVFDVEKVPMEWRSIPYGYPLPRQQYRVVDDLGRDCPDWVAGELWIGGDGIALGYFDDELKTQAQFLHIDGHAWYRTGDMGCYWPDGTLEFLGRRDKQVKVGGYRIELGEIEVALNNIPGVQRAVAIAVGNKDKTLAAFIVMDSEQAPIVTAPLDAEEVQLLLNKQLPNYMVPKRIIFLETFPLTANGKVDHKALTRMTNREKKTSQSINKPIITASEDRVAKIWNDVLGPTELYKSSDFFLSGGDAYNAIEVVKRCHKAGYLIKLSMLYRYSTIEAFAIIMDRCRLAPQEEAEL.

Residues Pro-965–Arg-1039 enclose the Carrier domain.

This sequence belongs to the ATP-dependent AMP-binding enzyme family.

It functions in the pathway siderophore biosynthesis; anguibactin biosynthesis. Its function is as follows. Bifunctional protein that plays an essential role in virulence. Plays a role in both the production of the siderophore anguibactin and the regulation of iron transport genes. The protein is Anguibactin system regulator (angR) of Vibrio anguillarum (Listonella anguillarum).